Consider the following 465-residue polypeptide: MVSAMRSRTLSKDDVNYKMHFRMINEQQVEDITIDFFYKPHTITLLTFTTVSLMYFAFTRENTSQEDNIWKGILSVIFFFLIISVLAFPNGPFTRPHPAIWRMVFGLSVLYFLFLVFLLFLNVEQVKAVMYWLDPNLRYATRESDVMEYAVNCHVITWERILSHFDIFAFGHFWGWAMKALLIRSYGLCWTISITWEMTELFFMHLLPNFAECWWDQVILDILLCNGGGILLGMVVCRFLEMRTYHWASFKDIHTTTGKIKRAVLQFTPASWIYVRWFDPKSSFQRVAGVYLFMIIWQLTELNTFFLKHIFVFQASHPLSWCRILFIGIITAPTVRQYYAYLTDTQCKRVGTQCWVFGAIAFLEATVCIKFGQDLFSKTHLLYVFLWLFSVAVITFLCLYGMVWYADYCGQREKTFSECEDSTYNTDIPWHHIDKPVEAPVKQNEGTSRRKNRHKGKVTNGVGKK.

The Cytoplasmic segment spans residues 1-35; it reads MVSAMRSRTLSKDDVNYKMHFRMINEQQVEDITID. The chain crosses the membrane as a helical span at residues 36-56; sequence FFYKPHTITLLTFTTVSLMYF. At 57 to 68 the chain is on the lumenal side; sequence AFTRENTSQEDN. A helical membrane pass occupies residues 69–89; the sequence is IWKGILSVIFFFLIISVLAFP. At 90–102 the chain is on the cytoplasmic side; that stretch reads NGPFTRPHPAIWR. A helical transmembrane segment spans residues 103 to 123; sequence MVFGLSVLYFLFLVFLLFLNV. At 124-186 the chain is on the lumenal side; that stretch reads EQVKAVMYWL…AMKALLIRSY (63 aa). Residues 187–207 form a helical membrane-spanning segment; it reads GLCWTISITWEMTELFFMHLL. Topologically, residues 208 to 216 are cytoplasmic; that stretch reads PNFAECWWD. Residues 217-237 form a helical membrane-spanning segment; that stretch reads QVILDILLCNGGGILLGMVVC. The Lumenal segment spans residues 238–286; that stretch reads RFLEMRTYHWASFKDIHTTTGKIKRAVLQFTPASWIYVRWFDPKSSFQR. A helical membrane pass occupies residues 287 to 307; it reads VAGVYLFMIIWQLTELNTFFL. Topologically, residues 308–319 are cytoplasmic; it reads KHIFVFQASHPL. Residues 320–342 traverse the membrane as a helical segment; it reads SWCRILFIGIITAPTVRQYYAYL. At 343-355 the chain is on the lumenal side; the sequence is TDTQCKRVGTQCW. A helical membrane pass occupies residues 356 to 376; that stretch reads VFGAIAFLEATVCIKFGQDLF. The Cytoplasmic portion of the chain corresponds to 377-383; it reads SKTHLLY. Residues 384–404 form a helical membrane-spanning segment; it reads VFLWLFSVAVITFLCLYGMVW. Residues 405 to 465 lie on the Lumenal side of the membrane; sequence YADYCGQREK…GKVTNGVGKK (61 aa). The disordered stretch occupies residues 440-465; it reads PVKQNEGTSRRKNRHKGKVTNGVGKK. Positions 449–465 are enriched in basic residues; it reads RRKNRHKGKVTNGVGKK.

This sequence belongs to the phosphatidyl serine synthase family.

The protein localises to the endoplasmic reticulum membrane. It catalyses the reaction a 1,2-diacyl-sn-glycero-3-phosphoethanolamine + L-serine = a 1,2-diacyl-sn-glycero-3-phospho-L-serine + ethanolamine. The catalysed reaction is a 1,2-diacyl-sn-glycero-3-phosphocholine + L-serine = a 1,2-diacyl-sn-glycero-3-phospho-L-serine + choline. The protein operates within phospholipid metabolism; phosphatidylserine biosynthesis. Its function is as follows. Catalyzes a base-exchange reaction in which the polar head group of phosphatidylethanolamine (PE) or phosphatidylcholine (PC) is replaced by L-serine. Catalyzes mainly the conversion of phosphatidylcholine but also converts, in vitro and to a lesser extent, phosphatidylethanolamine. This Xenopus tropicalis (Western clawed frog) protein is Phosphatidylserine synthase 1 (ptdss1).